The primary structure comprises 291 residues: Gamma-soluble NSF attachment protein (291 aa).

The protein belongs to the SNAP family.

It localises to the membrane. Required for vesicular transport between the endoplasmic reticulum and the Golgi apparatus. Binds to SNARE complex and then recruits NSF to disassemble it. The sequence is that of Gamma-soluble NSF attachment protein (GSNAP) from Arabidopsis thaliana (Mouse-ear cress).